The chain runs to 2063 residues: Nuclear receptor coactivator 6 (2063 aa).

The TBP/GTF2A-binding region stretch occupies residues 1 to 928 (MVLDDLPNLE…PPRKKKNSQQ (928 aa)). Positions 1–1057 (MVLDDLPNLE…LPVSQNVHPP (1057 aa)) are CREBBP-binding region. The tract at residues 1-1310 (MVLDDLPNLE…QTHKLDSVVV (1310 aa)) is NCOA1-binding region. Asymmetric dimethylarginine is present on Arg95. Disordered regions lie at residues 184-251 (IPPG…VNRQ), 281-549 (QQQQ…APQL), and 789-811 (RPPG…ANND). Residues 281–300 (QQQQQLQARPPQQHQQQQPQ) are compositionally biased toward low complexity. Polar residues-rich tracts occupy residues 353 to 368 (MQQQ…TVQT), 379 to 406 (GSQQ…QMKS), 417 to 453 (PLQQ…QQQM), 462 to 502 (PLPQ…QGPQ), and 522 to 549 (GQAN…APQL). The interval 773–927 (VNNSPSQVMG…KPPRKKKNSQ (155 aa)) is NCOA6IP-binding region. Ser884 bears the Phosphoserine; by MAPK; in vitro mark. The LXXLL motif 1 signature appears at 887 to 891 (LVNLL). Disordered stretches follow at residues 899 to 1278 (HFGV…LNPT), 1310 to 1353 (VNSG…KAPK), and 1448 to 1474 (EVKM…PSVE). Residues 903–912 (NNKQNNTNAN) show a composition bias toward low complexity. Residues 913-925 (KPKKKKPPRKKKN) are compositionally biased toward basic residues. A compositionally biased stretch (low complexity) spans 982-992 (PLQQMPPQLMQ). Pro residues predominate over residues 995–1020 (APPPQPPQQQPQPQLPQQQQPPPPSQ). Low complexity predominate over residues 1021 to 1041 (PQSQQQQQQQQQMMMMLMMQQ). 2 positions are modified to asymmetric dimethylarginine: Arg1047 and Arg1058. Positions 1063 to 1075 (PDSQRMPMQQSGS) are enriched in polar residues. Arg1096 carries the post-translational modification Asymmetric dimethylarginine. Polar residues-rich tracts occupy residues 1104–1125 (PLGS…SSSP), 1173–1191 (LSAT…SLPS), and 1202–1214 (APTQ…TPNR). Positions 1219-1232 (PYYPQTPNNRPPST) are enriched in pro residues. The segment covering 1310 to 1320 (VNSGKQSNSGA) has biased composition (polar residues). Residues 1322–1345 (KRASPSNSRRSSPGSSRKTTPSPG) show a composition bias toward low complexity. The LXXLL motif 2 signature appears at 1491-1495 (LSQLL). An EP300/CRSP3-binding region region spans residues 1641–2063 (SEGQSAAQSN…AVQSKRRKSK (423 aa)). The interval 1738–1820 (ATPVQLPSPP…VSSSKGKGKV (83 aa)) is disordered. The segment covering 1750 to 1763 (SSPVVPSHPPVQQV) has biased composition (low complexity). The segment covering 1773 to 1798 (PQVNTSADQNTLPSSQSTTMVSPLLT) has biased composition (polar residues). A compositionally biased stretch (low complexity) spans 1799 to 1815 (NSPGSSGNRRSPVSSSK). N6-acetyllysine occurs at positions 1819 and 1822. Disordered regions lie at residues 1837–1908 (GSLE…LPGG) and 1995–2063 (IVSG…RKSK). Residues 2002–2011 (EPKEIVEKSK) show a composition bias toward basic and acidic residues. Ser2018 carries the post-translational modification Phosphoserine.

In terms of assembly, monomer and homodimer. Interacts with RBM39. Interacts in vitro with the basal transcription factors GTF2A and TBP, suggesting an autonomous transactivation function. Interacts with NCOA1, CRSP3, RBM14, the histone acetyltransferases EP300 and CREBBP, and with the methyltransferases NCOA6IP and PRMT2/HRMT1L1. Component of the MLL2/3 complex (also named ASCOM complex), at least composed of KMT2D/MLL2 or KMT2C/MLL3, ASH2L, RBBP5, WDR5, NCOA6, DPY30, KDM6A, PAXIP1/PTIP, PAGR1 and alpha- and beta-tubulin. Interacts with ZNF335; may enhance ligand-dependent transcriptional activation by nuclear hormone receptors. Phosphorylated by PRKDC. In terms of processing, phosphorylation on Ser-884 leads to a strong decrease in binding to ESR1 and ESR2. As to expression, ubiquitous. Highly expressed in brain, prostate, testis and ovary; weakly expressed in lung, thymus and small intestine.

It is found in the nucleus. Nuclear receptor coactivator that directly binds nuclear receptors and stimulates the transcriptional activities in a hormone-dependent fashion. Coactivates expression in an agonist- and AF2-dependent manner. Involved in the coactivation of different nuclear receptors, such as for steroids (GR and ERs), retinoids (RARs and RXRs), thyroid hormone (TRs), vitamin D3 (VDR) and prostanoids (PPARs). Probably functions as a general coactivator, rather than just a nuclear receptor coactivator. May also be involved in the coactivation of the NF-kappa-B pathway. May coactivate expression via a remodeling of chromatin and its interaction with histone acetyltransferase proteins. In Homo sapiens (Human), this protein is Nuclear receptor coactivator 6 (NCOA6).